The chain runs to 159 residues: Transcriptional repressor NrdR (159 aa).

Positions 1–11 (MQCPTCQNTDS) are enriched in polar residues. Residues 1-21 (MQCPTCQNTDSRVLESRSADS) form a disordered region. A zinc finger lies at 3 to 34 (CPTCQNTDSRVLESRSADSGKSVRRRRECLNC). An ATP-cone domain is found at 49-139 (VSVMKKDGSR…VYRKFNGVKD (91 aa)).

This sequence belongs to the NrdR family. The cofactor is Zn(2+).

Its function is as follows. Negatively regulates transcription of bacterial ribonucleotide reductase nrd genes and operons by binding to NrdR-boxes. This is Transcriptional repressor NrdR from Prochlorococcus marinus (strain MIT 9215).